Consider the following 412-residue polypeptide: MVSYSNNHFAYAFLLLLTIGNTLAFSSSLPDHVQDPNLVVDDVNRSVFNASRRSLAYLSCRTGNPIDDCWRCDPNWETNRQRLADCAIGFGKNAIGGRKGRIYVVTDPANDDPVNPRPGTLRYAVTQEEPLWIIFKRDMVIRLKKELIITSFKTIDGRGSSVHITDGPCLKIHYATNIIIHGINIHDCKPGSGGMIKDGPHHTGWWMQSDGDAVAIFGGKHVWIDHCSLSNCDDGLIDAIHGSTAITISNNHMTHHDKVMLLGHSDSYTQDKNMQVTIAFNHFGEGLVQRMPRCRHGYFHVVNNDYTHWEMYAIGGSASPTIYSQGNRFLAPNTRFNKEVTKHEDAPESKWRDWNWRSEGDMLLNGAYFRESGAEAPSTYARASSLSARPSSLVGSITTTAGTLSCRRGRRC.

The signal sequence occupies residues 1-24 (MVSYSNNHFAYAFLLLLTIGNTLA). 3 residues coordinate Ca(2+): Asp210, Asp234, and Asp238. Arg290 is an active-site residue.

Belongs to the polysaccharide lyase 1 family. Ca(2+) serves as cofactor.

The catalysed reaction is Eliminative cleavage of (1-&gt;4)-alpha-D-galacturonan to give oligosaccharides with 4-deoxy-alpha-D-galact-4-enuronosyl groups at their non-reducing ends.. The protein operates within glycan metabolism; pectin degradation; 2-dehydro-3-deoxy-D-gluconate from pectin: step 2/5. The chain is Putative pectate lyase 11 from Arabidopsis thaliana (Mouse-ear cress).